A 348-amino-acid polypeptide reads, in one-letter code: S-adenosylmethionine:tRNA ribosyltransferase-isomerase (348 aa).

Belongs to the QueA family. In terms of assembly, monomer.

Its subcellular location is the cytoplasm. It carries out the reaction 7-aminomethyl-7-carbaguanosine(34) in tRNA + S-adenosyl-L-methionine = epoxyqueuosine(34) in tRNA + adenine + L-methionine + 2 H(+). It functions in the pathway tRNA modification; tRNA-queuosine biosynthesis. In terms of biological role, transfers and isomerizes the ribose moiety from AdoMet to the 7-aminomethyl group of 7-deazaguanine (preQ1-tRNA) to give epoxyqueuosine (oQ-tRNA). This is S-adenosylmethionine:tRNA ribosyltransferase-isomerase from Polynucleobacter asymbioticus (strain DSM 18221 / CIP 109841 / QLW-P1DMWA-1) (Polynucleobacter necessarius subsp. asymbioticus).